Reading from the N-terminus, the 476-residue chain is Doublecortin domain-containing protein 2 (476 aa).

Doublecortin domains are found at residues 17-100 and 139-221; these read KSVL…LNYL and CTIF…LPYS. Residues 234–476 form a disordered region; that stretch reads FGQKASSLPP…QQNKDYAAVA (243 aa). Residues 261 to 272 are compositionally biased toward polar residues; sequence STVGSSDNSSPQ. Phosphoserine is present on serine 270. The segment covering 279–289 has biased composition (basic and acidic residues); it reads KKEDVNSEKLT. A compositionally biased stretch (polar residues) spans 296–306; the sequence is KLKNSQETIPN. Residues 354 to 366 are compositionally biased toward basic and acidic residues; it reads EKANKDAEQKEDF. Over residues 415–426 the composition is skewed to low complexity; it reads ELQQVNNELQLV. The segment covering 446 to 455 has biased composition (basic and acidic residues); that stretch reads DPQRPPRPEV.

As to quaternary structure, interacts with DVL1, DVL2 and DVL3. Ubiquitously expressed. In brain, highly expressed in the entorhinal cortex, inferior temporal cortex, medial temporal cortex, hypothalamus, amygdala and hippocampus. Expressed in liver by cholangiocytes, the epithelial cells of the bile ducts (at protein level).

It localises to the cell projection. The protein resides in the cilium. It is found in the cytoplasm. Its subcellular location is the cytoskeleton. The protein localises to the cilium axoneme. It localises to the kinocilium. Its function is as follows. Protein that plays a role in the inhibition of canonical Wnt signaling pathway. May be involved in neuronal migration during development of the cerebral neocortex. Involved in the control of ciliogenesis and ciliary length. The polypeptide is Doublecortin domain-containing protein 2 (DCDC2) (Homo sapiens (Human)).